Reading from the N-terminus, the 179-residue chain is DELTA-actitoxin-Afr1e (179 aa).

The segment at 1–29 (SADVAGAVIDGAGLGFDVLKTVLEALGNV) is N-terminal alpha-helix that contributes to the pore. The N-terminal region stretch occupies residues 11–30 (GAGLGFDVLKTVLEALGNVK). R31 serves as a coordination point for an N-(acyl)-sphingosylphosphocholine. N-acetyl-D-glucosamine 6-sulfate contacts are provided by Y51 and R53. 13 residues coordinate an N-(acyl)-sphingosylphosphocholine: R53, S54, R79, G85, Y108, Y113, S114, W116, Y133, Y137, Y138, R144, and G168. The interval 105–120 (SVPYDYNWYSNWWNVR) is trp-rich region, which is important for the binding to lipid membrane. An N-acetyl-D-glucosamine 6-sulfate-binding site is contributed by Y138. The short motif at 144-146 (RGD) is the Cell attachment site, crucial for protein stability element.

This sequence belongs to the actinoporin family. Sea anemone subfamily. Octamer or nonamer in membranes. Monomer in the soluble state.

The protein resides in the secreted. Its subcellular location is the nematocyst. It localises to the target cell membrane. In terms of biological role, pore-forming toxin (PFT) that consists of a crown-shaped octamer or nonamer that forms cation-selective hydrophilic pores of about 1.5 nm (inside) and 13 nm (outside) and causes cytolysis. It causes cardiac stimulation. Also causes hemolysis (HC(50)=1.6 nM). Interestingly, the Phe-16 is crucial for hemolysis. Pore formation is a multi-step process that involves specific recognition of membrane sphingomyelin (but neither cholesterol nor phosphatidylcholine) using aromatic rich region and adjacent phosphocholine (POC) binding site, firm binding to the membrane (mainly driven by hydrophobic interactions) accompanied by the transfer of the N-terminal region to the lipid-water interface and finally pore formation after oligomerization of monomers. It is probable that a dimeric form is an assembly intermediate before the complete oligomerization. The formation of stable pores occurs only in vesicles composed of DOPC/SM (there is no oligomerization when the PFT is treated with vesicles of DOPC or SM alone). The transmembrane pore displays 8 lateral perforations, one at each subunit-subunit interface, partially occupied by the acyl-chain region of a bridging lipid. Each pore contains 24 lipid molecules, firmly bound to each subunit, that is, 3 lipids (L1, L2, L3, L4 and/or L5) are associated to each subunit. Lipid L1 bridges 2 subunits, whereas lipids L2 and L3 bind to sites at single subunit. This chain is DELTA-actitoxin-Afr1e, found in Actinia fragacea (Strawberry anemone).